Consider the following 154-residue polypeptide: Myoglobin (154 aa).

One can recognise a Globin domain in the interval 2-148; that stretch reads GLSDGEWQLV…FRKDIAAKYK (147 aa). Ser-4 is subject to Phosphoserine. A nitrite-binding site is contributed by His-65. His-65 contributes to the O2 binding site. Phosphothreonine is present on Thr-68. Residue His-94 coordinates heme b.

This sequence belongs to the globin family. As to quaternary structure, monomeric.

It is found in the cytoplasm. It localises to the sarcoplasm. It carries out the reaction Fe(III)-heme b-[protein] + nitric oxide + H2O = Fe(II)-heme b-[protein] + nitrite + 2 H(+). It catalyses the reaction H2O2 + AH2 = A + 2 H2O. Its function is as follows. Monomeric heme protein which primary function is to store oxygen and facilitate its diffusion within muscle tissues. Reversibly binds oxygen through a pentacoordinated heme iron and enables its timely and efficient release as needed during periods of heightened demand. Depending on the oxidative conditions of tissues and cells, and in addition to its ability to bind oxygen, it also has a nitrite reductase activity whereby it regulates the production of bioactive nitric oxide. Under stress conditions, like hypoxia and anoxia, it also protects cells against reactive oxygen species thanks to its pseudoperoxidase activity. The protein is Myoglobin (MB) of Peponocephala electra (Melon-headed whale).